The chain runs to 157 residues: Large ribosomal subunit protein eL24 (157 aa).

Residue Lys2 forms a Glycyl lysine isopeptide (Lys-Gly) (interchain with G-Cter in SUMO2) linkage. Glu4 carries the ADP-ribosyl glutamic acid modification. N6-acetyllysine; alternate is present on Lys27. A Glycyl lysine isopeptide (Lys-Gly) (interchain with G-Cter in SUMO2); alternate cross-link involves residue Lys27. Lys35 is covalently cross-linked (Glycyl lysine isopeptide (Lys-Gly) (interchain with G-Cter in SUMO2)). Lys77 carries the N6-acetyllysine modification. Thr83 bears the Phosphothreonine mark. A Phosphoserine modification is found at Ser86. Position 93 is an N6-acetyllysine (Lys93). The segment covering 106-117 (EQAIRAAKEAKK) has biased composition (basic and acidic residues). Positions 106–157 (EQAIRAAKEAKKAKQASKKTAMAAAKAPTKAAPKQKIVKPVKVSAPRVGGKR) are disordered. Positions 123 to 140 (KKTAMAAAKAPTKAAPKQ) are enriched in low complexity. Position 131 is an N6-succinyllysine (Lys131). A Glycyl lysine isopeptide (Lys-Gly) (interchain with G-Cter in SUMO2) cross-link involves residue Lys147. A Phosphoserine modification is found at Ser149.

The protein belongs to the eukaryotic ribosomal protein eL24 family. Component of the large ribosomal subunit. Mono-ADP-ribosylation at Glu-4 by PARP16 inhibits polysome assembly and mRNA loading, thereby inhibiting protein translation.

It is found in the cytoplasm. Component of the large ribosomal subunit. The ribosome is a large ribonucleoprotein complex responsible for the synthesis of proteins in the cell. This Bos taurus (Bovine) protein is Large ribosomal subunit protein eL24 (RPL24).